The chain runs to 170 residues: Putative pre-16S rRNA nuclease (170 aa).

The segment covering 1–18 (MGTDDRLPDRPGADDPGR) has biased composition (basic and acidic residues). Positions 1–22 (MGTDDRLPDRPGADDPGRGRRI) are disordered.

This sequence belongs to the YqgF nuclease family.

Its subcellular location is the cytoplasm. Its function is as follows. Could be a nuclease involved in processing of the 5'-end of pre-16S rRNA. This is Putative pre-16S rRNA nuclease from Mycolicibacterium smegmatis (strain ATCC 700084 / mc(2)155) (Mycobacterium smegmatis).